A 476-amino-acid chain; its full sequence is Glycogen synthase (476 aa).

An ADP-alpha-D-glucose-binding site is contributed by lysine 15.

Belongs to the glycosyltransferase 1 family. Bacterial/plant glycogen synthase subfamily.

It carries out the reaction [(1-&gt;4)-alpha-D-glucosyl](n) + ADP-alpha-D-glucose = [(1-&gt;4)-alpha-D-glucosyl](n+1) + ADP + H(+). It functions in the pathway glycan biosynthesis; glycogen biosynthesis. Its function is as follows. Synthesizes alpha-1,4-glucan chains using ADP-glucose. The protein is Glycogen synthase of Haemophilus influenzae (strain PittGG).